We begin with the raw amino-acid sequence, 166 residues long: Crossover junction endodeoxyribonuclease RuvC (166 aa).

Residues aspartate 7, glutamate 68, and aspartate 141 contribute to the active site. Aspartate 7, glutamate 68, and aspartate 141 together coordinate Mg(2+).

It belongs to the RuvC family. In terms of assembly, homodimer which binds Holliday junction (HJ) DNA. The HJ becomes 2-fold symmetrical on binding to RuvC with unstacked arms; it has a different conformation from HJ DNA in complex with RuvA. In the full resolvosome a probable DNA-RuvA(4)-RuvB(12)-RuvC(2) complex forms which resolves the HJ. The cofactor is Mg(2+).

It is found in the cytoplasm. It catalyses the reaction Endonucleolytic cleavage at a junction such as a reciprocal single-stranded crossover between two homologous DNA duplexes (Holliday junction).. Functionally, the RuvA-RuvB-RuvC complex processes Holliday junction (HJ) DNA during genetic recombination and DNA repair. Endonuclease that resolves HJ intermediates. Cleaves cruciform DNA by making single-stranded nicks across the HJ at symmetrical positions within the homologous arms, yielding a 5'-phosphate and a 3'-hydroxyl group; requires a central core of homology in the junction. The consensus cleavage sequence is 5'-(A/T)TT(C/G)-3'. Cleavage occurs on the 3'-side of the TT dinucleotide at the point of strand exchange. HJ branch migration catalyzed by RuvA-RuvB allows RuvC to scan DNA until it finds its consensus sequence, where it cleaves and resolves the cruciform DNA. The sequence is that of Crossover junction endodeoxyribonuclease RuvC from Koribacter versatilis (strain Ellin345).